The sequence spans 233 residues: GSK-3-binding protein FRAT2 (233 aa).

The tract at residues 1 to 24 is disordered; it reads MPCRREEEEEAGEEAEGEEEEDDS. The span at 7–24 shows a compositional bias: acidic residues; sequence EEEEAGEEAEGEEEEDDS. The segment at 174 to 196 is involved in GSK-3 binding; that stretch reads DPHRLLQQLVLSGNLIKEAVRRL. The interval 204-233 is disordered; the sequence is AATGPASAPGPGGGRSGPDRIALQPSGSLL.

The protein belongs to the GSK-3-binding protein family. Binds GSK-3 and prevents GSK-3-dependent phosphorylation.

Positively regulates the Wnt signaling pathway by stabilizing beta-catenin through the association with GSK-3. This is GSK-3-binding protein FRAT2 (FRAT2) from Homo sapiens (Human).